The following is a 339-amino-acid chain: Anthranilate phosphoribosyltransferase (339 aa).

5-phospho-alpha-D-ribose 1-diphosphate is bound by residues Gly-86, 89 to 90 (GD), Thr-94, 96 to 99 (NIST), 114 to 122 (KHGNRGVSS), and Ser-126. An anthranilate-binding site is contributed by Gly-86. A Mg(2+)-binding site is contributed by Ser-98. Anthranilate is bound at residue Asn-117. Anthranilate is bound at residue Arg-172. Asp-230 and Glu-231 together coordinate Mg(2+).

It belongs to the anthranilate phosphoribosyltransferase family. In terms of assembly, homodimer. The cofactor is Mg(2+).

The enzyme catalyses N-(5-phospho-beta-D-ribosyl)anthranilate + diphosphate = 5-phospho-alpha-D-ribose 1-diphosphate + anthranilate. The protein operates within amino-acid biosynthesis; L-tryptophan biosynthesis; L-tryptophan from chorismate: step 2/5. In terms of biological role, catalyzes the transfer of the phosphoribosyl group of 5-phosphorylribose-1-pyrophosphate (PRPP) to anthranilate to yield N-(5'-phosphoribosyl)-anthranilate (PRA). This Photobacterium profundum (strain SS9) protein is Anthranilate phosphoribosyltransferase.